Here is a 211-residue protein sequence, read N- to C-terminus: Rho-related GTP-binding protein RhoF (211 aa).

Met-1 carries the N-acetylmethionine modification. 26 to 33 (GDGGCGKT) is a binding site for GTP. The Effector region motif lies at 48-56 (YAPSVFEKY). Residues 73–77 (DTAGQ) and 131–134 (CKTD) each bind GTP. Cys-208 is modified (cysteine methyl ester). The S-geranylgeranyl cysteine moiety is linked to residue Cys-208. The propeptide at 209-211 (LLL) is removed in mature form.

It belongs to the small GTPase superfamily. Rho family.

The protein localises to the cell membrane. It localises to the cytoplasm. Its subcellular location is the cytoskeleton. Its function is as follows. Plasma membrane-associated small GTPase which cycles between an active GTP-bound and an inactive GDP-bound state. Causes the formation of thin, actin-rich surface projections called filopodia. Functions cooperatively with CDC42 and Rac to generate additional structures, increasing the diversity of actin-based morphology. The polypeptide is Rho-related GTP-binding protein RhoF (RHOF) (Homo sapiens (Human)).